The primary structure comprises 559 residues: GTP diphosphokinase CRSH2, chloroplastic (559 aa).

A chloroplast-targeting transit peptide spans 1-37 (MASAGGEVVVVDPAAAAVAPDVEHHAPAPRLTPAGSG). Residues 87–187 (SLARALIVAA…LELAIRLDAM (101 aa)) form the HD domain. 2 EF-hand domains span residues 449 to 484 (ASAGNIERAFRLLDKNGDGRISMEELTELMEDLGAG) and 486 to 518 (KDAEELMRLLDDNNDGSLSSDEFALFQKRVELK). Residues Asp462, Asn464, Asp466, Arg468, Glu473, Asp496, Asn498, Asp500, Ser502, and Glu507 each contribute to the Ca(2+) site.

This sequence belongs to the RelA/SpoT family. As to expression, expressed in shoots.

The protein resides in the plastid. It is found in the chloroplast. It catalyses the reaction GTP + ATP = guanosine 3'-diphosphate 5'-triphosphate + AMP. Its activity is regulated as follows. Activated by calcium. In terms of biological role, possesses calcium-dependent ppGpp (guanosine 3'-diphosphate 5'-diphosphate) synthetase activity in vitro and is able to functionally complement E.coli relA mutants. May be involved in a rapid plant ppGpp-mediated response to pathogens and other stresses. This is GTP diphosphokinase CRSH2, chloroplastic from Oryza sativa subsp. japonica (Rice).